The primary structure comprises 97 residues: Sm-like protein LSM3A (97 aa).

S2 carries the N-acetylserine modification. One can recognise a Sm domain in the interval 11–96 (EPLDLIRLSI…VILVSPPLRT (86 aa)).

The protein belongs to the snRNP Sm proteins family. In terms of assembly, component of the heptameric LSM1-LSM7 complex that forms a seven-membered ring structure with a donut shape. The LSM subunits are arranged in the order LSM1, LSM2, LSM3, LSM6, LSM5, LSM7 and LSM4. Component of the heptameric LSM2-LSM8 complex that forms a seven-membered ring structure with a donut shape. The LSM subunits are arranged in the order LSM8, LSM2, LSM3, LSM6, LSM5, LSM7 and LSM4. LSM3A subunit interacts only with its two neighboring subunits, LSM2 and LSM6A or LSM6B. Expressed in roots, leaves, stems, flowers and siliques.

The protein localises to the cytoplasm. It localises to the nucleus. Its function is as follows. Component of LSM protein complexes, which are involved in RNA processing. Component of the cytoplasmic LSM1-LSM7 complex which is involved in mRNA degradation by promoting decapping and leading to accurate 5'-3' mRNA decay. The cytoplasmic LSM1-LSM7 complex regulates developmental gene expression by the decapping of specific development-related transcripts. Component of the nuclear LSM2-LSM8 complex which is involved splicing nuclear mRNAs. LSM2-LSM8 binds directly to the U6 small nuclear RNAs (snRNAs) and is essential for accurate splicing of selected development-related mRNAs through the stabilization of the spliceosomal U6 snRNA. Plays a critical role in the regulation of development-related gene expression. In Arabidopsis thaliana (Mouse-ear cress), this protein is Sm-like protein LSM3A.